Here is a 181-residue protein sequence, read N- to C-terminus: Adenine phosphoribosyltransferase (181 aa).

This sequence belongs to the purine/pyrimidine phosphoribosyltransferase family. As to quaternary structure, homodimer.

The protein localises to the cytoplasm. The enzyme catalyses AMP + diphosphate = 5-phospho-alpha-D-ribose 1-diphosphate + adenine. The protein operates within purine metabolism; AMP biosynthesis via salvage pathway; AMP from adenine: step 1/1. In terms of biological role, catalyzes a salvage reaction resulting in the formation of AMP, that is energically less costly than de novo synthesis. This is Adenine phosphoribosyltransferase from Vibrio parahaemolyticus serotype O3:K6 (strain RIMD 2210633).